A 259-amino-acid polypeptide reads, in one-letter code: uncharacterized protein (259 aa).

The Radical SAM core domain occupies 19-249 (TKIPGAKYVI…DEVINTIKKK (231 aa)). 3 residues coordinate [4Fe-4S] cluster: Cys-34, Cys-38, and Cys-41.

[4Fe-4S] cluster serves as cofactor.

This is an uncharacterized protein from Methanocaldococcus jannaschii (strain ATCC 43067 / DSM 2661 / JAL-1 / JCM 10045 / NBRC 100440) (Methanococcus jannaschii).